The following is a 294-amino-acid chain: ATP synthase gamma chain (294 aa).

The protein belongs to the ATPase gamma chain family. F-type ATPases have 2 components, CF(1) - the catalytic core - and CF(0) - the membrane proton channel. CF(1) has five subunits: alpha(3), beta(3), gamma(1), delta(1), epsilon(1). CF(0) has three main subunits: a, b and c.

The protein resides in the cell inner membrane. Produces ATP from ADP in the presence of a proton gradient across the membrane. The gamma chain is believed to be important in regulating ATPase activity and the flow of protons through the CF(0) complex. The polypeptide is ATP synthase gamma chain (Paramagnetospirillum magneticum (strain ATCC 700264 / AMB-1) (Magnetospirillum magneticum)).